Reading from the N-terminus, the 304-residue chain is Aspartate carbamoyltransferase catalytic subunit (304 aa).

2 residues coordinate carbamoyl phosphate: R55 and T56. Position 83 (K83) interacts with L-aspartate. Carbamoyl phosphate contacts are provided by R105, H133, and Q136. L-aspartate contacts are provided by R166 and R220. Residues G261 and P262 each contribute to the carbamoyl phosphate site.

Belongs to the aspartate/ornithine carbamoyltransferase superfamily. ATCase family. As to quaternary structure, heterododecamer (2C3:3R2) of six catalytic PyrB chains organized as two trimers (C3), and six regulatory PyrI chains organized as three dimers (R2).

It carries out the reaction carbamoyl phosphate + L-aspartate = N-carbamoyl-L-aspartate + phosphate + H(+). Its pathway is pyrimidine metabolism; UMP biosynthesis via de novo pathway; (S)-dihydroorotate from bicarbonate: step 2/3. Functionally, catalyzes the condensation of carbamoyl phosphate and aspartate to form carbamoyl aspartate and inorganic phosphate, the committed step in the de novo pyrimidine nucleotide biosynthesis pathway. This is Aspartate carbamoyltransferase catalytic subunit from Caldanaerobacter subterraneus subsp. tengcongensis (strain DSM 15242 / JCM 11007 / NBRC 100824 / MB4) (Thermoanaerobacter tengcongensis).